A 187-amino-acid polypeptide reads, in one-letter code: Translation initiation factor IF-3 (187 aa).

It belongs to the IF-3 family. Monomer.

It is found in the cytoplasm. IF-3 binds to the 30S ribosomal subunit and shifts the equilibrium between 70S ribosomes and their 50S and 30S subunits in favor of the free subunits, thus enhancing the availability of 30S subunits on which protein synthesis initiation begins. This Leptospira biflexa serovar Patoc (strain Patoc 1 / Ames) protein is Translation initiation factor IF-3.